Reading from the N-terminus, the 221-residue chain is Putative hemin import ATP-binding protein HrtA (221 aa).

One can recognise an ABC transporter domain in the interval 3–221 (LVVEDIVKNF…IELEDGKITD (219 aa)). 39–46 (GASGSGKT) contributes to the ATP binding site.

Belongs to the ABC transporter superfamily. HrtA family. In terms of assembly, the complex is composed of two ATP-binding proteins (HrtA), two transmembrane proteins (HrtB) and a solute-binding protein.

The protein localises to the cell membrane. Part of the ABC transporter complex hrt involved in hemin import. Responsible for energy coupling to the transport system. The chain is Putative hemin import ATP-binding protein HrtA (hrtA) from Staphylococcus aureus (strain bovine RF122 / ET3-1).